The following is a 194-amino-acid chain: Chitin synthase 2 (194 aa).

Belongs to the chitin synthase family. Class III subfamily.

The protein resides in the cell membrane. It carries out the reaction [(1-&gt;4)-N-acetyl-beta-D-glucosaminyl](n) + UDP-N-acetyl-alpha-D-glucosamine = [(1-&gt;4)-N-acetyl-beta-D-glucosaminyl](n+1) + UDP + H(+). Its function is as follows. Polymerizes chitin, a structural polymer of the cell wall and septum, by transferring the sugar moiety of UDP-GlcNAc to the non-reducing end of the growing chitin polymer. The sequence is that of Chitin synthase 2 (CHS2) from Ajellomyces capsulatus (Darling's disease fungus).